Here is a 386-residue protein sequence, read N- to C-terminus: Succinate--CoA ligase [ADP-forming] subunit beta (386 aa).

Residues 9-244 enclose the ATP-grasp domain; the sequence is KAILRSYGVS…LDEEDPKEIE (236 aa). ATP contacts are provided by residues Lys46, 53-55, Glu99, Cys102, and Glu107; that span reads GRG. Mg(2+) contacts are provided by Asn199 and Asp213. Substrate is bound by residues Asn264 and 321–323; that span reads GIM.

Belongs to the succinate/malate CoA ligase beta subunit family. As to quaternary structure, heterotetramer of two alpha and two beta subunits. Requires Mg(2+) as cofactor.

The enzyme catalyses succinate + ATP + CoA = succinyl-CoA + ADP + phosphate. It catalyses the reaction GTP + succinate + CoA = succinyl-CoA + GDP + phosphate. It functions in the pathway carbohydrate metabolism; tricarboxylic acid cycle; succinate from succinyl-CoA (ligase route): step 1/1. Succinyl-CoA synthetase functions in the citric acid cycle (TCA), coupling the hydrolysis of succinyl-CoA to the synthesis of either ATP or GTP and thus represents the only step of substrate-level phosphorylation in the TCA. The beta subunit provides nucleotide specificity of the enzyme and binds the substrate succinate, while the binding sites for coenzyme A and phosphate are found in the alpha subunit. This is Succinate--CoA ligase [ADP-forming] subunit beta from Bacillus cytotoxicus (strain DSM 22905 / CIP 110041 / 391-98 / NVH 391-98).